Reading from the N-terminus, the 1060-residue chain is Carbamoyl phosphate synthase large chain (1060 aa).

The tract at residues 1-401 (MPKRTDIKKI…SLLKAVRSLE (401 aa)) is carboxyphosphate synthetic domain. ATP is bound by residues Arg-129, Arg-169, Gly-175, Gly-176, Lys-208, Ile-210, Glu-215, Gly-241, Ile-242, His-243, Gln-284, and Glu-298. One can recognise an ATP-grasp 1 domain in the interval 133-327 (KQLMEELEQP…IAKLAAKIAV (195 aa)). The Mg(2+) site is built by Gln-284, Glu-298, and Asn-300. Residues Gln-284, Glu-298, and Asn-300 each contribute to the Mn(2+) site. An oligomerization domain region spans residues 402 to 546 (IGAYHNELAE…YSTYEVENES (145 aa)). The carbamoyl phosphate synthetic domain stretch occupies residues 547 to 929 (NVSKKPSVLV…ALYKAFEASG (383 aa)). One can recognise an ATP-grasp 2 domain in the interval 671 to 861 (EQALQELAIP…MAQVATKAIL (191 aa)). The ATP site is built by Arg-707, Ser-746, Leu-748, Glu-752, Gly-777, Val-778, His-779, Ser-780, Gln-820, and Glu-832. Mg(2+) is bound by residues Gln-820, Glu-832, and Asn-834. Gln-820, Glu-832, and Asn-834 together coordinate Mn(2+). An MGS-like domain is found at 930–1060 (LHLPSYGAVL…ESRAFTTEAI (131 aa)). Positions 930-1060 (LHLPSYGAVL…ESRAFTTEAI (131 aa)) are allosteric domain.

Belongs to the CarB family. In terms of assembly, composed of two chains; the small (or glutamine) chain promotes the hydrolysis of glutamine to ammonia, which is used by the large (or ammonia) chain to synthesize carbamoyl phosphate. Tetramer of heterodimers (alpha,beta)4. The cofactor is Mg(2+). Requires Mn(2+) as cofactor.

The catalysed reaction is hydrogencarbonate + L-glutamine + 2 ATP + H2O = carbamoyl phosphate + L-glutamate + 2 ADP + phosphate + 2 H(+). It carries out the reaction hydrogencarbonate + NH4(+) + 2 ATP = carbamoyl phosphate + 2 ADP + phosphate + 2 H(+). Its pathway is amino-acid biosynthesis; L-arginine biosynthesis; carbamoyl phosphate from bicarbonate: step 1/1. It participates in pyrimidine metabolism; UMP biosynthesis via de novo pathway; (S)-dihydroorotate from bicarbonate: step 1/3. In terms of biological role, large subunit of the glutamine-dependent carbamoyl phosphate synthetase (CPSase). CPSase catalyzes the formation of carbamoyl phosphate from the ammonia moiety of glutamine, carbonate, and phosphate donated by ATP, constituting the first step of 2 biosynthetic pathways, one leading to arginine and/or urea and the other to pyrimidine nucleotides. The large subunit (synthetase) binds the substrates ammonia (free or transferred from glutamine from the small subunit), hydrogencarbonate and ATP and carries out an ATP-coupled ligase reaction, activating hydrogencarbonate by forming carboxy phosphate which reacts with ammonia to form carbamoyl phosphate. The chain is Carbamoyl phosphate synthase large chain from Enterococcus faecalis (strain ATCC 700802 / V583).